The following is a 275-amino-acid chain: Large ribosomal subunit protein uL2c (275 aa).

Positions 224 to 275 are disordered; it reads AMNPVDHPHGGGEGRTPIGRKKPVTPWGYSALGKKSRKRNRYSDASILRRRE.

Belongs to the universal ribosomal protein uL2 family. In terms of assembly, part of the 50S ribosomal subunit.

The protein resides in the plastid. Its subcellular location is the chloroplast. This is Large ribosomal subunit protein uL2c (rpl2) from Picea abies (Norway spruce).